The chain runs to 481 residues: Cysteine--tRNA ligase (481 aa).

Zn(2+) is bound at residue Cys29. Positions 31–41 (PTVYDYSHLGH) match the 'HIGH' region motif. Zn(2+) is bound by residues Cys210, His235, and Glu239. The 'KMSKS' region motif lies at 272-276 (KMSKS). Lys275 lines the ATP pocket.

Belongs to the class-I aminoacyl-tRNA synthetase family. In terms of assembly, monomer. It depends on Zn(2+) as a cofactor.

It is found in the cytoplasm. The catalysed reaction is tRNA(Cys) + L-cysteine + ATP = L-cysteinyl-tRNA(Cys) + AMP + diphosphate. This Anaeromyxobacter dehalogenans (strain 2CP-C) protein is Cysteine--tRNA ligase.